Reading from the N-terminus, the 26-residue chain is GTP-binding protein Rheb (26 aa).

GTP-binding residues include Ser-1, Ser-2, Val-13, Tyr-16, and Thr-19. A Mg(2+)-binding site is contributed by Ser-1. The Effector region signature appears at 16-24 (YDPTIENTF). Thr-19 provides a ligand contact to Mg(2+).

Belongs to the small GTPase superfamily. Rheb family.

The enzyme catalyses GTP + H2O = GDP + phosphate + H(+). Its function is as follows. Binds GTP and exhibits intrinsic GTPase activity. This is GTP-binding protein Rheb from Crocodylus siamensis (Siamese crocodile).